Here is a 941-residue protein sequence, read N- to C-terminus: Protein UL87 (941 aa).

N-linked (GlcNAc...) asparagine; by host glycosylation occurs at N37. The interval 482 to 508 is disordered; that stretch reads QRRSETGEEEEEETLESGETDATPPFD. Over residues 488 to 500 the composition is skewed to acidic residues; sequence GEEEEEETLESGE. N591, N661, and N801 each carry an N-linked (GlcNAc...) asparagine; by host glycan. Residues 910–929 show a composition bias toward low complexity; sequence VSSSSSVPSVPTSVSVDGSS. Residues 910–941 form a disordered region; that stretch reads VSSSSSVPSVPTSVSVDGSSEPTSPRARFASR.

This sequence belongs to the herpesviridae UL87 family.

It localises to the host nucleus. In terms of biological role, functions concordantly with UL87 to initiate transcription from over half of all active viral promoters in late infection, without affecting host transcription. Acts on and binds to viral early-late and late kinetic-class promoters. The chain is Protein UL87 (UL87) from Homo sapiens (Human).